The primary structure comprises 412 residues: FAD-dependent monooxygenase nscC (412 aa).

The first 21 residues, 1–21 (MGKQQETILIIGAGISGLATS), serve as a signal peptide directing secretion. FAD-binding residues include Glu-35 and Ala-46. A glycan (N-linked (GlcNAc...) asparagine) is linked at Asn-92. FAD is bound at residue Arg-119. N-linked (GlcNAc...) asparagine glycans are attached at residues Asn-170 and Asn-231. 2 residues coordinate FAD: Asp-326 and Gly-339.

This sequence belongs to the paxM FAD-dependent monooxygenase family. FAD is required as a cofactor.

The protein operates within secondary metabolite biosynthesis. FAD-dependent monooxygenase; part of the gene cluster that mediates the biosynthesis of neosartoricin B, a prenylated anthracenone that probably exhibits T-cell antiproliferative activity, suggestive of a physiological role as an immunosuppressive agent. The non-reducing polyketide synthase nscA probably synthesizes and cyclizes the decaketide backbone. The hydrolase nscB then mediates the product release through hydrolysis followed by spontaneous decarboxylation. The prenyltransferase nscD catalyzes the addition of the dimethylallyl group to the aromatic C5. The FAD-dependent monooxygenase nscC is then responsible for the stereospecific hydroxylation at C2. Neosartoricin B can be converted into two additional compounds neosartoricins C and D. Neosartoricin C is a spirocyclic compound that is cyclized through the attack of C3 hydroxyl on C14, followed by dehydration. On the other hand, neosartoricin D is a further cyclized compound in which attack of C2 on C14 in neosartoricin C results in the formation of the acetal-containing dioxabicyclo-octanone ring. Both of these compounds are novel and possibly represent related metabolites of the gene cluster. This chain is FAD-dependent monooxygenase nscC, found in Trichophyton tonsurans (strain CBS 112818) (Scalp ringworm fungus).